Consider the following 192-residue polypeptide: Probable apo-citrate lyase phosphoribosyl-dephospho-CoA transferase (192 aa).

It belongs to the CitX family.

It catalyses the reaction apo-[citrate lyase ACP] + 2'-(5''-triphospho-alpha-D-ribosyl)-3'-dephospho-CoA = holo-[citrate lyase ACP] + diphosphate. Its function is as follows. Transfers 2-(5''-triphosphoribosyl)-3'-dephosphocoenzyme-A on a serine residue to the apo-acyl carrier protein (gamma chain) of the citrate lyase to yield holo-acyl carrier protein. This is Probable apo-citrate lyase phosphoribosyl-dephospho-CoA transferase from Streptococcus pyogenes serotype M3 (strain ATCC BAA-595 / MGAS315).